The chain runs to 121 residues: Large ribosomal subunit protein bL12 (121 aa).

It belongs to the bacterial ribosomal protein bL12 family. As to quaternary structure, homodimer. Part of the ribosomal stalk of the 50S ribosomal subunit. Forms a multimeric L10(L12)X complex, where L10 forms an elongated spine to which 2 to 4 L12 dimers bind in a sequential fashion. Binds GTP-bound translation factors.

Forms part of the ribosomal stalk which helps the ribosome interact with GTP-bound translation factors. Is thus essential for accurate translation. The sequence is that of Large ribosomal subunit protein bL12 from Macrococcus caseolyticus (strain JCSC5402) (Macrococcoides caseolyticum).